A 366-amino-acid polypeptide reads, in one-letter code: Galactoside alpha-(1,2)-fucosyltransferase 1 (366 aa).

Over Met-1–Gln-8 the chain is Cytoplasmic. Residues Leu-9–Phe-25 traverse the membrane as a helical; Signal-anchor for type II membrane protein segment. Topologically, residues Leu-26–Pro-366 are lumenal. N-linked (GlcNAc...) asparagine glycans are attached at residues Asn-66, Asn-302, and Asn-328.

It belongs to the glycosyltransferase 11 family.

The protein resides in the golgi apparatus. Its subcellular location is the golgi stack membrane. It carries out the reaction a beta-D-galactosyl-(1-&gt;4)-N-acetyl-beta-D-glucosaminyl derivative + GDP-beta-L-fucose = an alpha-L-Fuc-(1-&gt;2)-beta-D-Gal-(1-&gt;4)-beta-D-GlcNAc derivative + GDP + H(+). The enzyme catalyses a ganglioside GA1 + GDP-beta-L-fucose = a ganglioside Fuc-GA1 + GDP + H(+). The catalysed reaction is a beta-D-Gal-(1-&gt;3)-beta-D-GlcNAc-(1-&gt;3)-beta-D-Gal-(1-&gt;4)-beta-D-Glc-(1&lt;-&gt;1')-Cer(d18:1(4E)) + GDP-beta-L-fucose = alpha-L-fucosyl-(1-&gt;2)- beta-D-galactosyl-(1-&gt;3)-N-acetyl-beta-D-glucosaminyl-(1-&gt;3)-beta-D-galactosyl-(1-&gt;4)-beta-D-glucosyl-(1&lt;-&gt;1')-N-acylsphing-4-enine + GDP + H(+). It catalyses the reaction a neolactoside nLc4Cer(d18:1(4E)) + GDP-beta-L-fucose = a neolactoside IV(2)-alpha-Fuc-nLc4Cer(d18:1(4E)) + GDP + H(+). It carries out the reaction a ganglioside GM1 + GDP-beta-L-fucose = a ganglioside Fuc-GM1 + GDP + H(+). The enzyme catalyses beta-D-galactosyl-(1-&gt;3)-N-acetyl-D-galactosamine + GDP-beta-L-fucose = alpha-L-fucosyl-(1-&gt;2)-beta-D-galactosyl-(1-&gt;3)-N-acetyl-D-galactosamine + GDP + H(+). Its pathway is protein modification; protein glycosylation. Its function is as follows. Catalyzes the transfer of L-fucose, from a guanosine diphosphate-beta-L-fucose, to the terminal galactose residue of glycoconjugates through an alpha(1,2) linkage leading to H antigen synthesis that is an intermediate substrate in the synthesis of ABO blood group antigens. H antigen is essential for maturation of the glomerular layer of the main olfactory bulb, in cell migration and early cell-cell contacts during tumor associated angiogenesis. Preferentially fucosylates soluble lactose and to a lesser extent fucosylates glycolipids gangliosides GA1 and GM1a. In Pan troglodytes (Chimpanzee), this protein is Galactoside alpha-(1,2)-fucosyltransferase 1.